Here is a 331-residue protein sequence, read N- to C-terminus: Ferredoxin--NADP reductase 2 (331 aa).

Residues E37, Q45, Y50, V90, F124, D286, and T327 each coordinate FAD.

It belongs to the ferredoxin--NADP reductase type 2 family. As to quaternary structure, homodimer. The cofactor is FAD.

It carries out the reaction 2 reduced [2Fe-2S]-[ferredoxin] + NADP(+) + H(+) = 2 oxidized [2Fe-2S]-[ferredoxin] + NADPH. This is Ferredoxin--NADP reductase 2 from Listeria innocua serovar 6a (strain ATCC BAA-680 / CLIP 11262).